Reading from the N-terminus, the 301-residue chain is MSARFYGVISPFITPFREDLSLDREAVAWLARYQAEKGVHGIFPNSTTGEFVHLSREEAVEVTRLVLEAVGGKVWVIPGISANYTEDSVALGRTFKDLGVDGAVVTPPYFFKVSPERLKVHFSTILEKVDLPIIVYNIPATTGINIPVGLYLELAKEHSNLAGAKATVESFTYFRQLVQVVKAERKDFAVLTGLDDLLLPVLMMGGDGGIMALANAAPQIHREVYDAYRSGDLKRALEAWHKLLRLVRVYDYATSFPTSVKTLLKVMGAPVKPYARTPLTPETREVEEKIAQIARELGLKI.

Threonine 47 functions as the Charge relay system in the catalytic mechanism. The active-site Proton donor is tyrosine 136. Lysine 165 (schiff-base intermediate with substrate) is an active-site residue.

It belongs to the DapA family. Homotetramer.

The protein localises to the cytoplasm. This is an uncharacterized protein from Thermofilum pendens (strain DSM 2475 / Hrk 5).